The following is a 409-amino-acid chain: Tyrosine--tRNA ligase (409 aa).

Residues 54–63 (PTAPDIHLGH) carry the 'HIGH' region motif. A 'KMSKS' region motif is present at residues 238–242 (KMSKS). Residue K241 coordinates ATP. An S4 RNA-binding domain is found at 347–407 (QGILRILREA…GKRKFARVKL (61 aa)).

This sequence belongs to the class-I aminoacyl-tRNA synthetase family. TyrS type 2 subfamily. As to quaternary structure, homodimer.

It is found in the cytoplasm. It carries out the reaction tRNA(Tyr) + L-tyrosine + ATP = L-tyrosyl-tRNA(Tyr) + AMP + diphosphate + H(+). In terms of biological role, catalyzes the attachment of tyrosine to tRNA(Tyr) in a two-step reaction: tyrosine is first activated by ATP to form Tyr-AMP and then transferred to the acceptor end of tRNA(Tyr). This Bordetella pertussis (strain Tohama I / ATCC BAA-589 / NCTC 13251) protein is Tyrosine--tRNA ligase.